The chain runs to 288 residues: Quinate/shikimate dehydrogenase (288 aa).

Residues Lys71 and Asp107 each coordinate substrate. NAD(+) is bound by residues 132 to 135 (AGGA), 155 to 158 (NRRD), Lys205, 232 to 235 (CVYN), and Gly255.

It belongs to the shikimate dehydrogenase family. As to quaternary structure, homodimer.

The catalysed reaction is L-quinate + NAD(+) = 3-dehydroquinate + NADH + H(+). It catalyses the reaction L-quinate + NADP(+) = 3-dehydroquinate + NADPH + H(+). It carries out the reaction shikimate + NADP(+) = 3-dehydroshikimate + NADPH + H(+). The enzyme catalyses shikimate + NAD(+) = 3-dehydroshikimate + NADH + H(+). It functions in the pathway metabolic intermediate biosynthesis; chorismate biosynthesis; chorismate from D-erythrose 4-phosphate and phosphoenolpyruvate: step 4/7. Functionally, the actual biological function of YdiB remains unclear, nor is it known whether 3-dehydroshikimate or quinate represents the natural substrate. Catalyzes the reversible NAD-dependent reduction of both 3-dehydroshikimate (DHSA) and 3-dehydroquinate to yield shikimate (SA) and quinate, respectively. It can use both NAD or NADP for catalysis, however it has higher catalytic efficiency with NAD. This is Quinate/shikimate dehydrogenase from Escherichia coli O139:H28 (strain E24377A / ETEC).